Reading from the N-terminus, the 108-residue chain is UPF0060 membrane protein CC_1976 (108 aa).

4 helical membrane passes run 4–24, 27–47, 59–79, and 85–105; these read FAIYVLAALAEIAGCFGFWAW, LGKSPAWAVLGVLSLVIFALL, AFAAYGGVYIIASLAWMQVVE, and RWDLIGGVICLAGAALILFGP.

The protein belongs to the UPF0060 family.

The protein resides in the cell inner membrane. The protein is UPF0060 membrane protein CC_1976 of Caulobacter vibrioides (strain ATCC 19089 / CIP 103742 / CB 15) (Caulobacter crescentus).